The sequence spans 219 residues: ATP phosphoribosyltransferase (219 aa).

Belongs to the ATP phosphoribosyltransferase family. Short subfamily. As to quaternary structure, heteromultimer composed of HisG and HisZ subunits.

Its subcellular location is the cytoplasm. The enzyme catalyses 1-(5-phospho-beta-D-ribosyl)-ATP + diphosphate = 5-phospho-alpha-D-ribose 1-diphosphate + ATP. It functions in the pathway amino-acid biosynthesis; L-histidine biosynthesis; L-histidine from 5-phospho-alpha-D-ribose 1-diphosphate: step 1/9. Functionally, catalyzes the condensation of ATP and 5-phosphoribose 1-diphosphate to form N'-(5'-phosphoribosyl)-ATP (PR-ATP). Has a crucial role in the pathway because the rate of histidine biosynthesis seems to be controlled primarily by regulation of HisG enzymatic activity. The sequence is that of ATP phosphoribosyltransferase from Syntrophotalea carbinolica (strain DSM 2380 / NBRC 103641 / GraBd1) (Pelobacter carbinolicus).